The primary structure comprises 98 residues: NADH-ubiquinone oxidoreductase chain 4L (98 aa).

A run of 3 helical transmembrane segments spans residues 1-21 (MPVVYVNIFLAFIVSLVGLLI), 29-49 (SLLCLEGMMLSLFVMLTVTVL), and 61-81 (IILLVFAACEAALGLSLLVMV).

It belongs to the complex I subunit 4L family. In terms of assembly, core subunit of respiratory chain NADH dehydrogenase (Complex I) which is composed of 45 different subunits.

Its subcellular location is the mitochondrion inner membrane. The enzyme catalyses a ubiquinone + NADH + 5 H(+)(in) = a ubiquinol + NAD(+) + 4 H(+)(out). Its function is as follows. Core subunit of the mitochondrial membrane respiratory chain NADH dehydrogenase (Complex I) which catalyzes electron transfer from NADH through the respiratory chain, using ubiquinone as an electron acceptor. Part of the enzyme membrane arm which is embedded in the lipid bilayer and involved in proton translocation. This is NADH-ubiquinone oxidoreductase chain 4L (MT-ND4L) from Ursus maritimus (Polar bear).